We begin with the raw amino-acid sequence, 262 residues long: Small ribosomal subunit protein eS1 (262 aa).

It belongs to the eukaryotic ribosomal protein eS1 family. As to quaternary structure, component of the small ribosomal subunit. Mature ribosomes consist of a small (40S) and a large (60S) subunit. The 40S subunit contains about 33 different proteins and 1 molecule of RNA (18S). The 60S subunit contains about 49 different proteins and 3 molecules of RNA (25S, 5.8S and 5S).

It is found in the cytoplasm. The protein is Small ribosomal subunit protein eS1 of Plasmodium vivax (strain Salvador I).